A 303-amino-acid polypeptide reads, in one-letter code: Protein-lysine N-methyltransferase rrg1 (303 aa).

Residues Trp-117, 143-145 (GAG), Asp-165, Trp-198, and Ser-221 each bind S-adenosyl-L-methionine.

It belongs to the class I-like SAM-binding methyltransferase superfamily. METTL21 family.

It is found in the cytoplasm. It localises to the nucleus. S-adenosyl-L-methionine-dependent protein-lysine N-methyltransferase that methylates elongation factor 2 and elongation factor 3A. In Schizosaccharomyces pombe (strain 972 / ATCC 24843) (Fission yeast), this protein is Protein-lysine N-methyltransferase rrg1.